The primary structure comprises 145 residues: Bacilliredoxin BLi02578/BL01507 (145 aa).

Belongs to the bacilliredoxin family.

The polypeptide is Bacilliredoxin BLi02578/BL01507 (Bacillus licheniformis (strain ATCC 14580 / DSM 13 / JCM 2505 / CCUG 7422 / NBRC 12200 / NCIMB 9375 / NCTC 10341 / NRRL NRS-1264 / Gibson 46)).